Consider the following 335-residue polypeptide: Ubiquinol oxidase 1b, mitochondrial (335 aa).

The transit peptide at 1–47 directs the protein to the mitochondrion; that stretch reads MSSRMAGATLLRHLGPRLFAAEPVYSGLAASARGVMPAAARIFPARM. The chain crosses the membrane as a helical span at residues 160–180; it reads ALLLETVAGVPGMVGGMLLHL. Fe cation is bound by residues Glu164, Glu203, and His206. Residues 222 to 242 traverse the membrane as a helical segment; the sequence is ALVLAAQGVFFNAYFVGYLVS. 3 residues coordinate Fe cation: Glu254, Glu305, and His308.

It belongs to the alternative oxidase family. Fe cation is required as a cofactor.

The protein localises to the mitochondrion inner membrane. It carries out the reaction 2 a ubiquinol + O2 = 2 a ubiquinone + 2 H2O. Its function is as follows. Catalyzes the cyanide-resistant oxidation of ubiquinol and the reduction of molecular oxygen to water, but does not translocate protons and consequently is not linked to oxidative phosphorylation. May increase respiration when the cytochrome respiratory pathway is restricted, or in response to low temperatures. This is Ubiquinol oxidase 1b, mitochondrial from Oryza sativa subsp. japonica (Rice).